We begin with the raw amino-acid sequence, 229 residues long: Triosephosphate isomerase (229 aa).

16-18 is a substrate binding site; that stretch reads NFK. His100 acts as the Electrophile in catalysis. Glu148 (proton acceptor) is an active-site residue. Substrate contacts are provided by residues Ile153, Gly188, and 209 to 210; that span reads AS.

Belongs to the triosephosphate isomerase family. Homotetramer; dimer of dimers.

Its subcellular location is the cytoplasm. The catalysed reaction is D-glyceraldehyde 3-phosphate = dihydroxyacetone phosphate. It functions in the pathway carbohydrate biosynthesis; gluconeogenesis. The protein operates within carbohydrate degradation; glycolysis; D-glyceraldehyde 3-phosphate from glycerone phosphate: step 1/1. In terms of biological role, involved in the gluconeogenesis. Catalyzes stereospecifically the conversion of dihydroxyacetone phosphate (DHAP) to D-glyceraldehyde-3-phosphate (G3P). The polypeptide is Triosephosphate isomerase (Methanothermobacter thermautotrophicus (strain ATCC 29096 / DSM 1053 / JCM 10044 / NBRC 100330 / Delta H) (Methanobacterium thermoautotrophicum)).